The sequence spans 278 residues: Potassium/proton antiporter CemA (278 aa).

4 helical membrane passes run 61 to 81 (VVFL…FLFG), 154 to 174 (CAIT…SILI), 203 to 223 (IILF…EVII), and 238 to 258 (FIFV…KYWI).

The protein belongs to the CemA family.

The protein resides in the plastid. Its subcellular location is the chloroplast inner membrane. The catalysed reaction is K(+)(in) + H(+)(out) = K(+)(out) + H(+)(in). Functionally, contributes to K(+)/H(+) antiport activity by supporting proton efflux to control proton extrusion and homeostasis in chloroplasts in a light-dependent manner to modulate photosynthesis. Prevents excessive induction of non-photochemical quenching (NPQ) under continuous-light conditions. Indirectly promotes efficient inorganic carbon uptake into chloroplasts. This chain is Potassium/proton antiporter CemA, found in Gracilaria tenuistipitata var. liui (Red alga).